The primary structure comprises 87 residues: Prolactin-releasing peptide (87 aa).

A signal peptide spans 1-22 (MKVLRAWLLCLLMLGLALRGAA). The residue at position 53 (Phe-53) is a Phenylalanine amide. The propeptide occupies 58 to 87 (ATLGDVPKPGLRPRLTCFPLEGGAMSSQDG).

Medulla oblongata and hypothalamus.

The protein resides in the secreted. Stimulates prolactin (PRL) release and regulates the expression of prolactin through its receptor GPR10. May stimulate lactotrophs directly to secrete PRL. The sequence is that of Prolactin-releasing peptide (PRLH) from Homo sapiens (Human).